A 505-amino-acid polypeptide reads, in one-letter code: ATP synthase subunit alpha, chloroplastic (505 aa).

170 to 177 (GDRQTGKT) is an ATP binding site.

It belongs to the ATPase alpha/beta chains family. In terms of assembly, F-type ATPases have 2 components, CF(1) - the catalytic core - and CF(0) - the membrane proton channel. CF(1) has five subunits: alpha(3), beta(3), gamma(1), delta(1), epsilon(1). CF(0) has four main subunits: a, b, b' and c.

The protein resides in the plastid. The protein localises to the chloroplast thylakoid membrane. It carries out the reaction ATP + H2O + 4 H(+)(in) = ADP + phosphate + 5 H(+)(out). Produces ATP from ADP in the presence of a proton gradient across the membrane. The alpha chain is a regulatory subunit. The sequence is that of ATP synthase subunit alpha, chloroplastic from Carica papaya (Papaya).